A 252-amino-acid chain; its full sequence is 2-succinyl-6-hydroxy-2,4-cyclohexadiene-1-carboxylate synthase (252 aa).

The protein belongs to the AB hydrolase superfamily. MenH family. In terms of assembly, monomer.

The catalysed reaction is 5-enolpyruvoyl-6-hydroxy-2-succinyl-cyclohex-3-ene-1-carboxylate = (1R,6R)-6-hydroxy-2-succinyl-cyclohexa-2,4-diene-1-carboxylate + pyruvate. The protein operates within quinol/quinone metabolism; 1,4-dihydroxy-2-naphthoate biosynthesis; 1,4-dihydroxy-2-naphthoate from chorismate: step 3/7. Its pathway is quinol/quinone metabolism; menaquinone biosynthesis. In terms of biological role, catalyzes a proton abstraction reaction that results in 2,5-elimination of pyruvate from 2-succinyl-5-enolpyruvyl-6-hydroxy-3-cyclohexene-1-carboxylate (SEPHCHC) and the formation of 2-succinyl-6-hydroxy-2,4-cyclohexadiene-1-carboxylate (SHCHC). This chain is 2-succinyl-6-hydroxy-2,4-cyclohexadiene-1-carboxylate synthase, found in Citrobacter koseri (strain ATCC BAA-895 / CDC 4225-83 / SGSC4696).